A 1440-amino-acid chain; its full sequence is Genome polyprotein (1440 aa).

Residues 32 to 53 (GGNEGSIMWLASLAVVIACAGA) constitute a propeptide, ER anchor for the capsid protein C, removed in mature form by serine protease NS3. Residues 36–56 (GSIMWLASLAVVIACAGAMKL) traverse the membrane as a helical segment. Topologically, residues 57–180 (SNFQGKLLMT…ATRYLMKTEN (124 aa)) are extracellular. N68 is a glycosylation site (N-linked (GlcNAc...) asparagine; by host). The helical transmembrane segment at 181 to 201 (WIVRNPGYAFLAAILGWMLGS) threads the bilayer. Residues 202–207 (NNGQRR) are Cytoplasmic-facing. Residues 208–222 (WYFTILLLLVAPAYS) traverse the membrane as a helical segment. At 223 to 674 (FNCLGMGNRD…QVFGGAFRTL (452 aa)) the chain is on the extracellular side. Cystine bridges form between C225-C252, C282-C338, C282-C343, C296-C327, C314-C338, and C314-C343. Residues 320 to 333 (DRGWGNGCGLFGKG) form a fusion peptide region. N376 carries an N-linked (GlcNAc...) asparagine; by host glycan. 2 cysteine pairs are disulfide-bonded: C412–C509 and C526–C557. The chain crosses the membrane as a helical span at residues 675–695 (FGGMSWITQGLMGALLLWMGV). Over 696–701 (NARDRS) the chain is Cytoplasmic. The chain crosses the membrane as a helical span at residues 702 to 722 (IALAFLATGGVLVFLATNVHA). The Extracellular segment spans residues 723–1147 (DTGCAIDITR…AFAEANSGGD (425 aa)). 6 disulfide bridges follow: C726-C737, C777-C865, C901-C945, C1002-C1051, C1013-C1034, and C1035-C1038. Residues N852 and N929 are each glycosylated (N-linked (GlcNAc...) asparagine; by host). The chain crosses the membrane as a helical span at residues 1148-1168 (VLHLALIAVFKIQPAFLVMNM). Residues 1169-1178 (LSTRWTNQEN) lie on the Cytoplasmic side of the membrane. Residues 1179 to 1199 (VVLVLGAAFFHLASVDLQIGV) traverse the membrane as a helical segment. Position 1200 (H1200) is a topological domain, lumenal. A helical membrane pass occupies residues 1201–1221 (GILNAAAIAWMIVRAITFPTT). At 1222 to 1237 (SSVTMPVLALLTPGMR) the chain is on the cytoplasmic side. Residues 1238-1258 (ALYLDTYRIILLVIGICSLLQ) form a helical membrane-spanning segment. Residues 1259 to 1269 (ERKKTMAKKKG) are Lumenal-facing. Residues 1270 to 1290 (AVLLGLALTSTGWFSPTTIAA) form a helical membrane-spanning segment. Over 1291–1302 (GLMVCNPNKKRG) the chain is Cytoplasmic. Residues 1303 to 1323 (WPATEFLSAVGLMFAIVGGLA) form a helical membrane-spanning segment. Topologically, residues 1324 to 1326 (ELD) are lumenal. Residues 1327 to 1347 (IESMSIPFMLAGLMAVSYVVS) traverse the membrane as a helical segment. Residues 1348–1404 (GKATDMWLERAADISWEMDAAITGSSRRLDVKLDDDGDFHLIDDPGVPWKVWVLRMS) lie on the Cytoplasmic side of the membrane. The segment at 1355–1394 (LERAADISWEMDAAITGSSRRLDVKLDDDGDFHLIDDPGV) is interacts with and activates NS3 protease. The segment at residues 1405 to 1425 (CIGLAALTPWAIVPAAFGYWL) is an intramembrane region (helical). The Cytoplasmic portion of the chain corresponds to 1426-1440 (TLKTTKRGGVFWDTP).

As to quaternary structure, homodimer. Interacts (via N-terminus) with host EXOC1 (via C-terminus); this interaction results in EXOC1 degradation through the proteasome degradation pathway. In terms of assembly, forms heterodimers with envelope protein E in the endoplasmic reticulum and Golgi. Homodimer; in the endoplasmic reticulum and Golgi. Interacts with protein prM. Interacts with non-structural protein 1. As to quaternary structure, homodimer; Homohexamer when secreted. Interacts with envelope protein E. NS1 interacts with NS4B. Interacts with host complement protein CFH; this interaction leads to the degradation of C3. In terms of assembly, interacts (via N-terminus) with serine protease NS3. Forms a heterodimer with serine protease NS3. May form homooligomers. As to quaternary structure, forms a heterodimer with NS2B. Interacts with non-structural protein 2A (via N-terminus). Interacts with NS4B. Interacts with unphosphorylated RNA-directed RNA polymerase NS5; this interaction stimulates RNA-directed RNA polymerase NS5 guanylyltransferase activity. Requires Mn(2+) as cofactor. It depends on Mg(2+) as a cofactor. Specific enzymatic cleavages in vivo yield mature proteins. Cleavages in the lumen of endoplasmic reticulum are performed by host signal peptidase, whereas cleavages in the cytoplasmic side are performed by serine protease NS3. Signal cleavage at the 2K-4B site requires a prior NS3 protease-mediated cleavage at the 4A-2K site. In terms of processing, cleaved in post-Golgi vesicles by a host furin, releasing the mature small envelope protein M, and peptide pr. This cleavage is incomplete as up to 30% of viral particles still carry uncleaved prM. Post-translationally, N-glycosylated. N-glycosylated. The excreted form is glycosylated and this is required for efficient secretion of the protein from infected cells. In terms of processing, RNA-directed RNA polymerase NS5: Phosphorylated on serines residues. This phosphorylation may trigger NS5 nuclear localization.

The protein resides in the virion. The protein localises to the host nucleus. Its subcellular location is the host cytoplasm. It localises to the host perinuclear region. It is found in the secreted. The protein resides in the virion membrane. The protein localises to the host endoplasmic reticulum membrane. The catalysed reaction is Selective hydrolysis of -Xaa-Xaa-|-Yaa- bonds in which each of the Xaa can be either Arg or Lys and Yaa can be either Ser or Ala.. It catalyses the reaction a ribonucleoside 5'-triphosphate + H2O = a ribonucleoside 5'-diphosphate + phosphate + H(+). It carries out the reaction ATP + H2O = ADP + phosphate + H(+). Its function is as follows. Plays a role in virus budding by binding to the cell membrane and gathering the viral RNA into a nucleocapsid that forms the core of a mature virus particle. During virus entry, may induce genome penetration into the host cytoplasm after hemifusion induced by the surface proteins. Can migrate to the cell nucleus where it modulates host functions. Overcomes the anti-viral effects of host EXOC1 by sequestering and degrading the latter through the proteasome degradation pathway. In terms of biological role, inhibits RNA silencing by interfering with host Dicer. Functionally, prevents premature fusion activity of envelope proteins in trans-Golgi by binding to envelope protein E at pH 6.0. After virion release in extracellular space, gets dissociated from E dimers. Acts as a chaperone for envelope protein E during intracellular virion assembly by masking and inactivating envelope protein E fusion peptide. prM is the only viral peptide matured by host furin in the trans-Golgi network probably to avoid catastrophic activation of the viral fusion activity in acidic Golgi compartment prior to virion release. prM-E cleavage is inefficient, and many virions are only partially matured. These uncleaved prM would play a role in immune evasion. Its function is as follows. May play a role in virus budding. Exerts cytotoxic effects by activating a mitochondrial apoptotic pathway through M ectodomain. May display a viroporin activity. In terms of biological role, binds to host cell surface receptor and mediates fusion between viral and cellular membranes. Envelope protein is synthesized in the endoplasmic reticulum in the form of heterodimer with protein prM. They play a role in virion budding in the ER, and the newly formed immature particle is covered with 60 spikes composed of heterodimer between precursor prM and envelope protein E. The virion is transported to the Golgi apparatus where the low pH causes dissociation of PrM-E heterodimers and formation of E homodimers. prM-E cleavage is inefficient, and many virions are only partially matured. These uncleaved prM would play a role in immune evasion. Functionally, involved in immune evasion, pathogenesis and viral replication. Once cleaved off the polyprotein, is targeted to three destinations: the viral replication cycle, the plasma membrane and the extracellular compartment. Essential for viral replication. Required for formation of the replication complex and recruitment of other non-structural proteins to the ER-derived membrane structures. Excreted as a hexameric lipoparticle that plays a role against host immune response. Antagonizing the complement function. Binds to the host macrophages and dendritic cells. Inhibits signal transduction originating from Toll-like receptor 3 (TLR3). Component of the viral RNA replication complex that functions in virion assembly and antagonizes the host alpha/beta interferon antiviral response. Its function is as follows. Required cofactor for the serine protease function of NS3. May have membrane-destabilizing activity and form viroporins. In terms of biological role, displays three enzymatic activities: serine protease, NTPase and RNA helicase. NS3 serine protease, in association with NS2B, performs its autocleavage and cleaves the polyprotein at dibasic sites in the cytoplasm: C-prM, NS2A-NS2B, NS2B-NS3, NS3-NS4A, NS4A-2K and NS4B-NS5. NS3 RNA helicase binds RNA and unwinds dsRNA in the 3' to 5' direction. Functionally, non-structural protein 4A: Regulates the ATPase activity of the NS3 helicase activity. NS4A allows NS3 helicase to conserve energy during unwinding. Peptide 2k: Functions as a signal peptide for NS4B and is required for the interferon antagonism activity of the latter. Its function is as follows. Non-structural protein 4B: Induces the formation of ER-derived membrane vesicles where the viral replication takes place. Inhibits interferon (IFN)-induced host STAT1 phosphorylation and nuclear translocation, thereby preventing the establishment of cellular antiviral state by blocking the IFN-alpha/beta pathway. Inhibits STAT2 translocation in the nucleus after IFN-alpha treatment. In terms of biological role, RNA-directed RNA polymerase NS5: Replicates the viral (+) and (-) RNA genome. Performs the capping of genomes in the cytoplasm. NS5 methylates viral RNA cap at guanine N-7 and ribose 2'-O positions. Besides its role in RNA genome replication, also prevents the establishment of cellular antiviral state by blocking the interferon-alpha/beta (IFN-alpha/beta) signaling pathway. Inhibits host TYK2 and STAT2 phosphorylation, thereby preventing activation of JAK-STAT signaling pathway. The polypeptide is Genome polyprotein (Japanese encephalitis virus (strain Nakayama) (JEV)).